A 128-amino-acid chain; its full sequence is Fluoride-specific ion channel FluC (128 aa).

A run of 4 helical transmembrane segments spans residues 3–23, 34–54, 69–89, and 100–120; these read FSVIFAVGIGGFFGAISRFLI, LFPVGTLTVNVLGSFIIGFLY, FITGFLGALTTFSTFSLETLL, and FLNILLNVILTISSTFAAIIL. Na(+) contacts are provided by glycine 75 and threonine 78.

The protein belongs to the fluoride channel Fluc/FEX (TC 1.A.43) family.

The protein localises to the cell inner membrane. It catalyses the reaction fluoride(in) = fluoride(out). Na(+) is not transported, but it plays an essential structural role and its presence is essential for fluoride channel function. Functionally, fluoride-specific ion channel. Important for reducing fluoride concentration in the cell, thus reducing its toxicity. The polypeptide is Fluoride-specific ion channel FluC (Nitratiruptor sp. (strain SB155-2)).